Here is a 630-residue protein sequence, read N- to C-terminus: GTPase-activating protein NEL1 (630 aa).

Belongs to the SEC23/SEC24 family. SEC23 subfamily.

The protein resides in the cytoplasm. Its subcellular location is the nucleus. Acts as a GTPase-activating protein (GAP) for SAR1. Contrary to its SEC23 homolog, NEL1 does not associate with SEC24 and its homologs, nor does it associate with the COPII components, suggesting that it is unlikely that NEL1 functions as a structural component of the vesicle coat machinery. May function as a signaling molecule. In Saccharomyces cerevisiae (strain ATCC 204508 / S288c) (Baker's yeast), this protein is GTPase-activating protein NEL1.